We begin with the raw amino-acid sequence, 178 residues long: Putative magnesium-dependent phosphatase YER134C (178 aa).

Asp11 functions as the Nucleophile in the catalytic mechanism. Residue Asp11 participates in Mg(2+) binding. Phosphate contacts are provided by Leu12, Asp13, Ser74, and Arg75. Position 13 (Asp13) interacts with Mg(2+). The Proton donor role is filled by Asp13. Arg75 lines the substrate pocket. Position 141 (Asp141) interacts with Mg(2+).

The protein belongs to the HAD-like hydrolase superfamily.

Its subcellular location is the cytoplasm. The protein localises to the nucleus. The enzyme catalyses O-phospho-L-tyrosyl-[protein] + H2O = L-tyrosyl-[protein] + phosphate. Functionally, magnesium-dependent phosphatase which may act as a tyrosine phosphatase. The chain is Putative magnesium-dependent phosphatase YER134C from Saccharomyces cerevisiae (strain ATCC 204508 / S288c) (Baker's yeast).